The primary structure comprises 508 residues: Photosystem II CP47 reaction center protein (508 aa).

Helical transmembrane passes span 21 to 36 (SVHI…WAGS), 101 to 115 (IVFS…IWHW), 140 to 156 (GIHL…FGAF), 203 to 218 (IAAG…FHLS), 237 to 252 (VLSS…AFVV), and 457 to 472 (SFAL…HGAR).

The protein belongs to the PsbB/PsbC family. PsbB subfamily. PSII is composed of 1 copy each of membrane proteins PsbA, PsbB, PsbC, PsbD, PsbE, PsbF, PsbH, PsbI, PsbJ, PsbK, PsbL, PsbM, PsbT, PsbX, PsbY, PsbZ, Psb30/Ycf12, at least 3 peripheral proteins of the oxygen-evolving complex and a large number of cofactors. It forms dimeric complexes. It depends on Binds multiple chlorophylls. PSII binds additional chlorophylls, carotenoids and specific lipids. as a cofactor.

It localises to the plastid. Its subcellular location is the chloroplast thylakoid membrane. Its function is as follows. One of the components of the core complex of photosystem II (PSII). It binds chlorophyll and helps catalyze the primary light-induced photochemical processes of PSII. PSII is a light-driven water:plastoquinone oxidoreductase, using light energy to abstract electrons from H(2)O, generating O(2) and a proton gradient subsequently used for ATP formation. This chain is Photosystem II CP47 reaction center protein, found in Illicium oligandrum (Star anise).